Here is a 98-residue protein sequence, read N- to C-terminus: NADH-ubiquinone oxidoreductase chain 4L (98 aa).

A run of 3 helical transmembrane segments spans residues 1 to 21 (MSLVYMNIMTAFTVSLTGLLM), 29 to 49 (SLLCLEGMMLALFVMATLTIL), and 61 to 81 (IILLVFAACEAALGLSLLVMV).

It belongs to the complex I subunit 4L family. As to quaternary structure, core subunit of respiratory chain NADH dehydrogenase (Complex I) which is composed of 45 different subunits.

It localises to the mitochondrion inner membrane. The catalysed reaction is a ubiquinone + NADH + 5 H(+)(in) = a ubiquinol + NAD(+) + 4 H(+)(out). Its function is as follows. Core subunit of the mitochondrial membrane respiratory chain NADH dehydrogenase (Complex I) which catalyzes electron transfer from NADH through the respiratory chain, using ubiquinone as an electron acceptor. Part of the enzyme membrane arm which is embedded in the lipid bilayer and involved in proton translocation. The sequence is that of NADH-ubiquinone oxidoreductase chain 4L (MT-ND4L) from Elaphodus cephalophus (Tufted deer).